Reading from the N-terminus, the 295-residue chain is UDP-N-acetylenolpyruvoylglucosamine reductase (295 aa).

The region spanning 24–188 is the FAD-binding PCMH-type domain; sequence KVGGNAEIFF…LKAVFKINKG (165 aa). The active site involves R168. The active-site Proton donor is the S217. E287 is an active-site residue.

It belongs to the MurB family. FAD is required as a cofactor.

It localises to the cytoplasm. It catalyses the reaction UDP-N-acetyl-alpha-D-muramate + NADP(+) = UDP-N-acetyl-3-O-(1-carboxyvinyl)-alpha-D-glucosamine + NADPH + H(+). It participates in cell wall biogenesis; peptidoglycan biosynthesis. In terms of biological role, cell wall formation. The protein is UDP-N-acetylenolpyruvoylglucosamine reductase of Rickettsia massiliae (strain Mtu5).